Consider the following 116-residue polypeptide: Large ribosomal subunit protein bL20c (116 aa).

The protein belongs to the bacterial ribosomal protein bL20 family.

The protein resides in the plastid. The protein localises to the chloroplast. Its function is as follows. Binds directly to 23S ribosomal RNA and is necessary for the in vitro assembly process of the 50S ribosomal subunit. It is not involved in the protein synthesizing functions of that subunit. The protein is Large ribosomal subunit protein bL20c of Oltmannsiellopsis viridis (Marine flagellate).